The following is a 255-amino-acid chain: 14-3-3 protein epsilon (255 aa).

The residue at position 1 (M1) is an N-acetylmethionine. K50 is subject to N6-acetyllysine; alternate. K50 is covalently cross-linked (Glycyl lysine isopeptide (Lys-Gly) (interchain with G-Cter in SUMO2); alternate). S65 carries the post-translational modification Phosphoserine. 3 positions are modified to N6-acetyllysine: K69, K118, and K123. Residue Y131 is modified to Phosphotyrosine. The residue at position 137 (T137) is a Phosphothreonine. The residue at position 210 (S210) is a Phosphoserine. A Phosphothreonine modification is found at T232. A disordered region spans residues 234–255; it reads DMQGDGEEQNKEALQDVEDENQ.

The protein belongs to the 14-3-3 family. Homodimer. Heterodimerizes with YWHAZ. Interacts with PKA-phosphorylated AANAT. Interacts with ABL1 (phosphorylated form); the interaction retains it in the cytoplasm. Interacts with ARHGEF28. Interacts with BEX3. Weakly interacts with CDKN1B. Interacts with the 'Thr-369' phosphorylated form of DAPK2. Interacts with DENND1A. Interacts with GAB2. Interacts with phosphorylated GRB10. Interacts with KSR1. Interacts with NDEL1. Interacts with PI4KB, TBC1D22A and TBC1D22B. Interacts with the phosphorylated (by AKT1) form of SRPK2. Interacts with TIAM2. Interacts with the 'Ser-1134' and 'Ser-1161' phosphorylated form of SOS1. Interacts with ZFP36 (via phosphorylated form). Interacts with SLITRK1. Interacts with HSF1 (via phosphorylated form); this interaction promotes HSF1 sequestration in the cytoplasm in a ERK-dependent manner. Interacts with RIPOR2. Interacts with KLHL22; required for the nuclear localization of KLHL22 upon amino acid starvation. Interacts with CRTC1. Interacts with CRTC2 (probably when phosphorylated at 'Ser-171'). Interacts with CRTC3 (probably when phosphorylated at 'Ser-162' and/or 'Ser-273'). Interacts with ATP2B1 and ATP2B3; this interaction inhibits calcium-transporting ATPase activity. Interacts with MEFV. Interacts with RNF115. Interacts with GPR15; this interaction promotes ER-to-Golgi transport of GPR15.

The protein resides in the nucleus. The protein localises to the cytoplasm. Its subcellular location is the melanosome. Functionally, adapter protein implicated in the regulation of a large spectrum of both general and specialized signaling pathways. Binds to a large number of partners, usually by recognition of a phosphoserine or phosphothreonine motif. Binding generally results in the modulation of the activity of the binding partner. Positively regulates phosphorylated protein HSF1 nuclear export to the cytoplasm. This is 14-3-3 protein epsilon (Ywhae) from Rattus norvegicus (Rat).